The sequence spans 570 residues: Rho GTPase-activating protein gacEE (570 aa).

Residues N127–D233 enclose the PH domain. The C2 domain occupies W224–L343. Residues D260, D266, D312, D314, and D320 each coordinate Ca(2+). One can recognise a Rho-GAP domain in the interval N381–L567.

Ca(2+) is required as a cofactor.

The protein localises to the cytoplasm. Its function is as follows. Rho GTPase-activating protein involved in the signal transduction pathway. This Dictyostelium discoideum (Social amoeba) protein is Rho GTPase-activating protein gacEE (gacEE).